Here is a 272-residue protein sequence, read N- to C-terminus: F-actin-capping protein subunit beta (272 aa).

An N-acetylserine modification is found at S2. At S2 the chain carries Phosphoserine. K235 carries the post-translational modification N6-acetyllysine. V263 carries the post-translational modification Phosphoserine.

It belongs to the F-actin-capping protein beta subunit family. In terms of assembly, component of the F-actin capping complex, composed of a heterodimer of an alpha and a beta subunit. Subunit of dynactin, a multiprotein complex part of a tripartite complex with dynein and a adapter, such as BICDL1, BICD2 or HOOK3. The dynactin complex is built around ACTR1A/ACTB filament and consists of an actin-related filament composed of a shoulder domain, a pointed end and a barbed end. Its length is defined by its flexible shoulder domain. The soulder is composed of 2 DCTN1 subunits, 4 DCTN2 and 2 DCTN3. The 4 DCNT2 (via N-terminus) bind the ACTR1A filament and act as molecular rulers to determine the length. The pointed end is important for binding dynein-dynactin cargo adapters. Consists of 4 subunits: ACTR10, DCNT4, DCTN5 and DCTN6. The barbed end is composed of a CAPZA1:CAPZB heterodimers, which binds ACTR1A/ACTB filament and dynactin and stabilizes dynactin. Interacts with ARHGAP17. Interaction with RCSD1/CAPZIP. Component of the WASH complex, composed of F-actin-capping protein subunit alpha (CAPZA1, CAPZA2 or CAPZA3), F-actin-capping protein subunit beta (CAPZB), WASH (WASHC1, WASH2P, WASH3P, WASH4P, WASH5P or WASH6P), WASHC2 (WASHC2A or WASHC2C), WASHC3, WASHC4 and WASHC5. Interacts with ACTG1. Directly interacts with CRACD; this interaction decreases binding to actin.

The protein localises to the cytoplasm. It localises to the cytoskeleton. Its subcellular location is the myofibril. The protein resides in the sarcomere. Functionally, F-actin-capping proteins bind in a Ca(2+)-independent manner to the fast growing ends of actin filaments (barbed end) thereby blocking the exchange of subunits at these ends. Unlike other capping proteins (such as gelsolin and severin), these proteins do not sever actin filaments. Plays a role in the regulation of cell morphology and cytoskeletal organization. Forms, with CAPZB, the barbed end of the fast growing ends of actin filaments in the dynactin complex and stabilizes dynactin structure. The dynactin multiprotein complex activates the molecular motor dynein for ultra-processive transport along microtubules. In Homo sapiens (Human), this protein is F-actin-capping protein subunit beta.